A 373-amino-acid polypeptide reads, in one-letter code: COP9 signalosome complex subunit 5 (373 aa).

The MPN domain occupies 66–201; it reads CLISRLATTK…IGAFRTLPSK (136 aa). The Zn(2+) site is built by H147, H149, and D160. The JAMM motif signature appears at 147 to 160; the sequence is HSHPGYGCWLSNID. Positions 289–325 are disordered; it reads FTHERSNSISSTSSLTTRHTTDVEMDDQESAQSSLDI. Residues 295 to 306 show a composition bias toward low complexity; it reads NSISSTSSLTTR.

Belongs to the peptidase M67A family. CSN5 subfamily. As to quaternary structure, component of the COP9 signalosome (CSN) complex.

The protein resides in the cytoplasm. Its subcellular location is the nucleus. Catalytic Component of the COP9 signalosome (CSN) complex that acts as an regulator of the ubiquitin (Ubl) conjugation pathway by mediating the deneddylation of the cullin subunit of SCF-type E3 ubiquitin-protein ligase complexes. The CNS complex is involved in the regulation of the mating pheromone response. The polypeptide is COP9 signalosome complex subunit 5 (RRI1) (Kluyveromyces lactis (strain ATCC 8585 / CBS 2359 / DSM 70799 / NBRC 1267 / NRRL Y-1140 / WM37) (Yeast)).